A 185-amino-acid polypeptide reads, in one-letter code: Ribosome-recycling factor (185 aa).

The protein belongs to the RRF family.

It localises to the cytoplasm. Its function is as follows. Responsible for the release of ribosomes from messenger RNA at the termination of protein biosynthesis. May increase the efficiency of translation by recycling ribosomes from one round of translation to another. In Halothermothrix orenii (strain H 168 / OCM 544 / DSM 9562), this protein is Ribosome-recycling factor.